The sequence spans 200 residues: GTP cyclohydrolase-2 (200 aa).

49 to 53 (RIHSE) is a GTP binding site. Zn(2+) contacts are provided by cysteine 54, cysteine 65, and cysteine 67. Residues glutamine 70, 92–94 (EGR), and threonine 114 contribute to the GTP site. The active-site Proton acceptor is the aspartate 126. The active-site Nucleophile is the arginine 128. The GTP site is built by threonine 149 and lysine 154.

This sequence belongs to the GTP cyclohydrolase II family. Zn(2+) is required as a cofactor.

It carries out the reaction GTP + 4 H2O = 2,5-diamino-6-hydroxy-4-(5-phosphoribosylamino)-pyrimidine + formate + 2 phosphate + 3 H(+). It functions in the pathway cofactor biosynthesis; riboflavin biosynthesis; 5-amino-6-(D-ribitylamino)uracil from GTP: step 1/4. Its function is as follows. Catalyzes the conversion of GTP to 2,5-diamino-6-ribosylamino-4(3H)-pyrimidinone 5'-phosphate (DARP), formate and pyrophosphate. The chain is GTP cyclohydrolase-2 from Saccharophagus degradans (strain 2-40 / ATCC 43961 / DSM 17024).